A 238-amino-acid polypeptide reads, in one-letter code: tRNA (guanine-N(7)-)-methyltransferase (238 aa).

S-adenosyl-L-methionine contacts are provided by E68, E93, D120, and D143. The active site involves D143. Substrate-binding positions include K147, D179, and 216 to 219; that span reads TKFE.

The protein belongs to the class I-like SAM-binding methyltransferase superfamily. TrmB family.

The catalysed reaction is guanosine(46) in tRNA + S-adenosyl-L-methionine = N(7)-methylguanosine(46) in tRNA + S-adenosyl-L-homocysteine. It functions in the pathway tRNA modification; N(7)-methylguanine-tRNA biosynthesis. In terms of biological role, catalyzes the formation of N(7)-methylguanine at position 46 (m7G46) in tRNA. In Shewanella baltica (strain OS155 / ATCC BAA-1091), this protein is tRNA (guanine-N(7)-)-methyltransferase.